Consider the following 142-residue polypeptide: Large ribosomal subunit protein uL16 (142 aa).

It belongs to the universal ribosomal protein uL16 family. In terms of assembly, part of the 50S ribosomal subunit.

Functionally, binds 23S rRNA and is also seen to make contacts with the A and possibly P site tRNAs. In Thermotoga maritima (strain ATCC 43589 / DSM 3109 / JCM 10099 / NBRC 100826 / MSB8), this protein is Large ribosomal subunit protein uL16.